The primary structure comprises 535 residues: Aklavinone 12-hydroxylase RdmE (535 aa).

FAD contacts are provided by Leu-15, Gly-16, Glu-35, Gln-119, and Leu-143. Tyr-224 functions as the Proton acceptor in the catalytic mechanism. Position 308 (Asp-308) interacts with FAD. Gly-317 provides a ligand contact to aklavinone.

This sequence belongs to the PheA/TfdB FAD monooxygenase family. In terms of assembly, monomer. FAD serves as cofactor.

It carries out the reaction aklavinone + NADPH + O2 + H(+) = epsilon-rhodomycinone + NADP(+) + H2O. The protein operates within antibiotic biosynthesis; daunorubicin biosynthesis. Its pathway is antibiotic biosynthesis; carminomycin biosynthesis. It participates in antibiotic biosynthesis; rhodomycin biosynthesis. Its activity is regulated as follows. Inhibited by phenylglyoxal and 2,3-butanedione. NADP provides a partial protection against inhibition by phenylglyoxal. Increasing the methanol concentration in the assay causes inhibition of the enzyme. Its function is as follows. Involved in the biosynthesis of the anthracyclines carminomycin, rhodomycin and daunorubicin (daunomycin) which are aromatic polyketide antibiotics that exhibit high cytotoxicity and are widely applied in the chemotherapy of a variety of cancers. Catalyzes the incorporation of a hydroxyl group at position C-11 of aklavinone, resulting in epsilon-rhodomycinone. It cannot accept substrates glycosylated at position C-7 and is specific for the C-9R configuration of anthracyclines. It can use both NAD or NADP but it is slowly inactivated in the presence of NADH. This chain is Aklavinone 12-hydroxylase RdmE (rdmE), found in Streptomyces purpurascens.